Consider the following 84-residue polypeptide: Sulfur carrier protein TusA (84 aa).

Residue cysteine 19 is the Cysteine persulfide intermediate of the active site.

Belongs to the sulfur carrier protein TusA family. As to quaternary structure, interacts with IscS.

The protein resides in the cytoplasm. The protein operates within tRNA modification. Functionally, sulfur carrier protein involved in sulfur trafficking in the cell. Part of a sulfur-relay system required for 2-thiolation during synthesis of 2-thiouridine of the modified wobble base 5-methylaminomethyl-2-thiouridine (mnm(5)s(2)U) in tRNA. Interacts with IscS and stimulates its cysteine desulfurase activity. Accepts an activated sulfur from IscS, which is then transferred to TusD, and thus determines the direction of sulfur flow from IscS to 2-thiouridine formation. Also appears to be involved in sulfur transfer for the biosynthesis of molybdopterin. In Yersinia enterocolitica serotype O:8 / biotype 1B (strain NCTC 13174 / 8081), this protein is Sulfur carrier protein TusA.